The following is a 337-amino-acid chain: MSELKTGHAGHNPWASVANSGPISILSYCGSSILMTVTNKFVVNLKDFNMNFVMLFVQSLVCTITLIILRILGYAKFRSLNKTDAKNWFPISFLLVLMIYTSSKALQYLAVPIYTIFKNLTIILIAYGEVLFFGGSVTSMELSSFLLMVLSSVVATWGDQQAVAAKAASLAEGAAGAVASFNPGYFWMFTNCITSALFVLIMRKRIKLTNFKDFDTMFYNNVLALPILLLFSFCVEDWSSVNLTNNFSNDSLTAMIISGVASVGISYCSGWCVRVTSSTTYSMVGALNKLPIALSGLIFFDAPRNFLSILSIFIGFLSGIIYAVAKQKKQQAQPLRK.

The Cytoplasmic segment spans residues 1-16 (MSELKTGHAGHNPWAS). A helical transmembrane segment spans residues 17-37 (VANSGPISILSYCGSSILMTV). The Lumenal portion of the chain corresponds to 38–51 (TNKFVVNLKDFNMN). Residues 52-72 (FVMLFVQSLVCTITLIILRIL) traverse the membrane as a helical segment. The Cytoplasmic segment spans residues 73–92 (GYAKFRSLNKTDAKNWFPIS). A helical membrane pass occupies residues 93-113 (FLLVLMIYTSSKALQYLAVPI). Residues 114 to 119 (YTIFKN) are Lumenal-facing. Asn119 is a glycosylation site (N-linked (GlcNAc...) asparagine). The helical transmembrane segment at 120 to 140 (LTIILIAYGEVLFFGGSVTSM) threads the bilayer. Residues 141-144 (ELSS) are Cytoplasmic-facing. A helical transmembrane segment spans residues 145-165 (FLLMVLSSVVATWGDQQAVAA). The Lumenal portion of the chain corresponds to 166–180 (KAASLAEGAAGAVAS). A helical transmembrane segment spans residues 181–201 (FNPGYFWMFTNCITSALFVLI). The Cytoplasmic segment spans residues 202–215 (MRKRIKLTNFKDFD). Residues 216-236 (TMFYNNVLALPILLLFSFCVE) form a helical membrane-spanning segment. At 237-252 (DWSSVNLTNNFSNDSL) the chain is on the lumenal side. N-linked (GlcNAc...) asparagine glycosylation is found at Asn242, Asn246, and Asn249. Residues 253–273 (TAMIISGVASVGISYCSGWCV) form a helical membrane-spanning segment. Topologically, residues 274–279 (RVTSST) are cytoplasmic. A helical membrane pass occupies residues 280-300 (TYSMVGALNKLPIALSGLIFF). Topologically, residues 301 to 304 (DAPR) are lumenal. A helical membrane pass occupies residues 305-325 (NFLSILSIFIGFLSGIIYAVA). Residues 326–337 (KQKKQQAQPLRK) lie on the Cytoplasmic side of the membrane.

The protein belongs to the TPT transporter family. SLC35D subfamily. As to quaternary structure, homooligomer.

The protein localises to the golgi apparatus membrane. The protein resides in the cytoplasmic vesicle membrane. It localises to the endoplasmic reticulum membrane. Its function is as follows. Involved in the import of GDP-mannose from the cytoplasm into the Golgi lumen. Defective copy causes severe glycosylation defect and abnormal retention of soluble endoplasmic reticulum proteins. Involved in vanadate sensitivity. The sequence is that of GDP-mannose transporter 1 (VRG4) from Saccharomyces cerevisiae (strain YJM789) (Baker's yeast).